The following is a 94-amino-acid chain: Selenoprotein K (94 aa).

The chain crosses the membrane as a helical span at residues 20 to 42; that stretch reads LSFITDFFWGIAEFVVFFFKTLL. Positions 48-94 are disordered; it reads KRRGYGGSSDSRYDDGRGPPGNPPRRMGRISHLRGPSPPPMAGGUGR. Position 92 (selenocysteine 92) is a non-standard amino acid, selenocysteine.

It belongs to the selenoprotein K family. Interacts with DERL1, DERL2, DERL3 and SELENOS. The SELENOK-SELENOS complex interacts with VCP. Interacts with ZDHHC6. Cleaved by CAPN2/m-calpain in resting macrophages but not in activated macrophages. Macrophage activation up-regulates expression of the calpain inhibitor CAST/calpastatin, resulting in inhibition of CAPN2 activity. In terms of processing, truncated SELENOK proteins produced by failed UGA/Sec decoding are ubiquitinated by the CRL2(KLHDC2) complex, which recognizes the diglycine (Gly-Gly) at the C-terminus of truncated SELENOK proteins.

The protein resides in the endoplasmic reticulum membrane. Its subcellular location is the cell membrane. Required for Ca(2+) flux in immune cells and plays a role in T-cell proliferation and in T-cell and neutrophil migration. Involved in endoplasmic reticulum-associated degradation (ERAD) of soluble glycosylated proteins. Required for palmitoylation and cell surface expression of CD36 and involved in macrophage uptake of low-density lipoprotein and in foam cell formation. Together with ZDHHC6, required for palmitoylation of ITPR1 in immune cells, leading to regulate ITPR1 stability and function. Plays a role in protection of cells from ER stress-induced apoptosis. Protects cells from oxidative stress when overexpressed in cardiomyocytes. The sequence is that of Selenoprotein K from Rattus norvegicus (Rat).